A 188-amino-acid polypeptide reads, in one-letter code: ADP-ribosylation factor K (188 aa).

Residues 34–40, 75–79, and 134–137 contribute to the GTP site; these read DGAGKST, DVGGQ, and NKQD.

The protein belongs to the small GTPase superfamily. Arf family.

The protein resides in the golgi apparatus. Functionally, GTP-binding protein that may be involved in protein trafficking. May modulate vesicle budding and uncoating within the Golgi apparatus. The protein is ADP-ribosylation factor K (arrK) of Dictyostelium discoideum (Social amoeba).